The following is a 178-amino-acid chain: Sec-independent protein translocase protein TatB (178 aa).

A helical membrane pass occupies residues 1–21 (MFDIGWSELVVIAVVALIAIG). Polar residues predominate over residues 77-86 (TSGNLMTKLT). The tract at residues 77-178 (TSGNLMTKLT…HEAVKDAKAS (102 aa)) is disordered. Residues 93-102 (PKLEDLDKPA) are compositionally biased toward basic and acidic residues. Residues 155-165 (HATPEPAPATH) are compositionally biased toward low complexity. Residues 166-178 (ETPHEAVKDAKAS) show a composition bias toward basic and acidic residues.

Belongs to the TatB family. The Tat system comprises two distinct complexes: a TatABC complex, containing multiple copies of TatA, TatB and TatC subunits, and a separate TatA complex, containing only TatA subunits. Substrates initially bind to the TatABC complex, which probably triggers association of the separate TatA complex to form the active translocon.

The protein resides in the cell inner membrane. Its function is as follows. Part of the twin-arginine translocation (Tat) system that transports large folded proteins containing a characteristic twin-arginine motif in their signal peptide across membranes. Together with TatC, TatB is part of a receptor directly interacting with Tat signal peptides. TatB may form an oligomeric binding site that transiently accommodates folded Tat precursor proteins before their translocation. In Nitrobacter hamburgensis (strain DSM 10229 / NCIMB 13809 / X14), this protein is Sec-independent protein translocase protein TatB.